The chain runs to 429 residues: Endo-1,4-beta-xylanase 1 (429 aa).

An N-terminal signal peptide occupies residues 1-19 (MQTKSILTAALLAAAPASA). The GH10 domain maps to 43–336 (NSDQQYNRIL…KPAWTSISSV (294 aa)). Catalysis depends on Glu-150, which acts as the Proton donor. Glu-257 functions as the Nucleophile in the catalytic mechanism. Residues Cys-286 and Cys-292 are joined by a disulfide bond. Residues 364–395 (TTPPPISSPIVPSTTTTSAVPTTTVSPPEPEQ) are disordered. Residues 371–389 (SPIVPSTTTTSAVPTTTVS) show a composition bias toward low complexity. The 37-residue stretch at 393–429 (PEQTRWGQCGGIGWNGPTKCQSPWTCTRLNDWYFQCL) folds into the CBM1 domain.

The protein belongs to the glycosyl hydrolase 10 (cellulase F) family.

The protein resides in the secreted. The enzyme catalyses Endohydrolysis of (1-&gt;4)-beta-D-xylosidic linkages in xylans.. It participates in glycan degradation; xylan degradation. Its function is as follows. Endo-1,4-beta-xylanase involved in the hydrolysis of xylan, a major structural heterogeneous polysaccharide found in plant biomass representing the second most abundant polysaccharide in the biosphere, after cellulose. The polypeptide is Endo-1,4-beta-xylanase 1 (Humicola insolens (Soft-rot fungus)).